The sequence spans 339 residues: Anthranilate phosphoribosyltransferase (339 aa).

5-phospho-alpha-D-ribose 1-diphosphate contacts are provided by residues G82, 85–86 (GD), T90, 92–95 (NIST), and 110–118 (KHGNRAVSS). G82 lines the anthranilate pocket. S94 is a binding site for Mg(2+). Anthranilate contacts are provided by N113 and R168. D227 and E228 together coordinate Mg(2+).

It belongs to the anthranilate phosphoribosyltransferase family. In terms of assembly, homodimer. Mg(2+) is required as a cofactor.

It carries out the reaction N-(5-phospho-beta-D-ribosyl)anthranilate + diphosphate = 5-phospho-alpha-D-ribose 1-diphosphate + anthranilate. Its pathway is amino-acid biosynthesis; L-tryptophan biosynthesis; L-tryptophan from chorismate: step 2/5. Its function is as follows. Catalyzes the transfer of the phosphoribosyl group of 5-phosphorylribose-1-pyrophosphate (PRPP) to anthranilate to yield N-(5'-phosphoribosyl)-anthranilate (PRA). This chain is Anthranilate phosphoribosyltransferase, found in Clostridium beijerinckii (strain ATCC 51743 / NCIMB 8052) (Clostridium acetobutylicum).